The following is a 246-amino-acid chain: 1-(5-phosphoribosyl)-5-[(5-phosphoribosylamino)methylideneamino] imidazole-4-carboxamide isomerase (246 aa).

Asp-8 functions as the Proton acceptor in the catalytic mechanism. Catalysis depends on Asp-131, which acts as the Proton donor.

The protein belongs to the HisA/HisF family.

Its subcellular location is the cytoplasm. It carries out the reaction 1-(5-phospho-beta-D-ribosyl)-5-[(5-phospho-beta-D-ribosylamino)methylideneamino]imidazole-4-carboxamide = 5-[(5-phospho-1-deoxy-D-ribulos-1-ylimino)methylamino]-1-(5-phospho-beta-D-ribosyl)imidazole-4-carboxamide. It participates in amino-acid biosynthesis; L-histidine biosynthesis; L-histidine from 5-phospho-alpha-D-ribose 1-diphosphate: step 4/9. The protein is 1-(5-phosphoribosyl)-5-[(5-phosphoribosylamino)methylideneamino] imidazole-4-carboxamide isomerase of Bordetella petrii (strain ATCC BAA-461 / DSM 12804 / CCUG 43448).